An 880-amino-acid chain; its full sequence is Leucine--tRNA ligase (880 aa).

Positions 46–56 (PYPSGALHMGH) match the 'HIGH' region motif. The short motif at 638 to 642 (KMSKS) is the 'KMSKS' region element. Position 641 (lysine 641) interacts with ATP.

This sequence belongs to the class-I aminoacyl-tRNA synthetase family.

The protein resides in the cytoplasm. It carries out the reaction tRNA(Leu) + L-leucine + ATP = L-leucyl-tRNA(Leu) + AMP + diphosphate. This chain is Leucine--tRNA ligase, found in Xanthomonas oryzae pv. oryzae (strain MAFF 311018).